The sequence spans 673 residues: Beta-galactosidase GalA (673 aa).

Arg-105 serves as a coordination point for substrate. A Zn(2+)-binding site is contributed by Cys-109. Position 143 (Asn-143) interacts with substrate. Glu-144 (proton donor) is an active-site residue. Zn(2+) is bound by residues Cys-149, Cys-151, and Cys-154. Glu-308 serves as the catalytic Nucleophile. Residues Trp-316 and 356 to 359 (EKFH) each bind substrate.

The protein belongs to the glycosyl hydrolase 42 family. In terms of assembly, homodimer.

The enzyme catalyses Hydrolysis of terminal non-reducing beta-D-galactose residues in beta-D-galactosides.. With respect to regulation, inhibited by hydrolysis end products D-galactose and D-glucose. The hydrolysis of o-nitrophenyl-beta-D-galactopyranoside (ONPG) is slightly activated by monovalent ions, Na(+) and K(+). Concentrations of these ions in the range of 1-100 mM exert the stimulating effects. The presence of 1 mM Mn(2+) together with the presence of 10 mM Na(+) slightly stimulates the activity, while presence of 10 mM Mn(2+) inhibits the activity by about 40%. Catalyzes the hydrolysis of lactose to its constituent monosaccharides glucose and galactose. Possesses a low level of transgalactosylation activity for the production of galacto-oligosaccharides (GOS) from lactose. The chain is Beta-galactosidase GalA from Bacillus licheniformis (strain ATCC 14580 / DSM 13 / JCM 2505 / CCUG 7422 / NBRC 12200 / NCIMB 9375 / NCTC 10341 / NRRL NRS-1264 / Gibson 46).